Consider the following 228-residue polypeptide: Heptaprenylglyceryl phosphate synthase (228 aa).

Lys-12 provides a ligand contact to sn-glycerol 1-phosphate. The Mg(2+) site is built by Asp-14 and Thr-40. Residues 159 to 164 (YLEYSG), Gly-189, and 209 to 210 (GN) contribute to the sn-glycerol 1-phosphate site.

Belongs to the GGGP/HepGP synthase family. Group I subfamily. In terms of assembly, homodimer. Mg(2+) is required as a cofactor.

It catalyses the reaction sn-glycerol 1-phosphate + all-trans-heptaprenyl diphosphate = 3-heptaprenyl-sn-glycero-1-phosphate + diphosphate. It functions in the pathway membrane lipid metabolism; glycerophospholipid metabolism. Its function is as follows. Prenyltransferase that catalyzes in vivo the transfer of the heptaprenyl moiety of heptaprenyl pyrophosphate (HepPP; 35 carbon atoms) to the C3 hydroxyl of sn-glycerol-1-phosphate (G1P), producing heptaprenylglyceryl phosphate (HepGP). This reaction is an ether-bond-formation step in the biosynthesis of archaea-type G1P-based membrane lipids found in Bacillales. In Geobacillus sp. (strain WCH70), this protein is Heptaprenylglyceryl phosphate synthase.